A 476-amino-acid polypeptide reads, in one-letter code: Transcriptional regulator claA (476 aa).

The segment at residues 25–52 (CDTCLKAKIKCSQAKPTCARCLQQGRQC) is a DNA-binding region (zn(2)-C6 fungal-type). Positions 63-92 (PSTKNLPLDQLQQPKGRTAGGTARRSLSRR) are disordered. Polar residues predominate over residues 64–77 (STKNLPLDQLQQPK).

The protein localises to the nucleus. Its function is as follows. Transcriptional regulator; part of the cla gene cluster that produces clavatol and ortho-quinone methide. The clavatol biosynthesis cluster cla and the terrestric acid cluster tra are both involved in the production of peniphenones and penilactones. The polypeptide is Transcriptional regulator claA (Penicillium crustosum (Blue mold fungus)).